Here is a 138-residue protein sequence, read N- to C-terminus: ATP synthase epsilon chain (138 aa).

It belongs to the ATPase epsilon chain family. F-type ATPases have 2 components, CF(1) - the catalytic core - and CF(0) - the membrane proton channel. CF(1) has five subunits: alpha(3), beta(3), gamma(1), delta(1), epsilon(1). CF(0) has three main subunits: a, b and c.

The protein localises to the cell inner membrane. Produces ATP from ADP in the presence of a proton gradient across the membrane. This Geobacter sp. (strain M21) protein is ATP synthase epsilon chain.